Here is a 30-residue protein sequence, read N- to C-terminus: Dermaseptin-3.1TR (30 aa).

As to expression, expressed by the skin glands.

It localises to the secreted. Has antimicrobial activity. This chain is Dermaseptin-3.1TR, found in Phyllomedusa trinitatis (Trinidad leaf frog).